The following is a 230-amino-acid chain: Orotidine 5'-phosphate decarboxylase (230 aa).

Substrate is bound by residues Asp-11, Lys-34, 61-70 (DLKLHDIPNT), Thr-117, Arg-179, Gln-188, Gly-208, and Arg-209. The active-site Proton donor is Lys-63.

The protein belongs to the OMP decarboxylase family. Type 1 subfamily. As to quaternary structure, homodimer.

It carries out the reaction orotidine 5'-phosphate + H(+) = UMP + CO2. The protein operates within pyrimidine metabolism; UMP biosynthesis via de novo pathway; UMP from orotate: step 2/2. Catalyzes the decarboxylation of orotidine 5'-monophosphate (OMP) to uridine 5'-monophosphate (UMP). The chain is Orotidine 5'-phosphate decarboxylase from Streptococcus pyogenes serotype M18 (strain MGAS8232).